We begin with the raw amino-acid sequence, 253 residues long: Imidazole glycerol phosphate synthase subunit HisF (253 aa).

Active-site residues include Asp-11 and Asp-130.

Belongs to the HisA/HisF family. As to quaternary structure, heterodimer of HisH and HisF.

Its subcellular location is the cytoplasm. The enzyme catalyses 5-[(5-phospho-1-deoxy-D-ribulos-1-ylimino)methylamino]-1-(5-phospho-beta-D-ribosyl)imidazole-4-carboxamide + L-glutamine = D-erythro-1-(imidazol-4-yl)glycerol 3-phosphate + 5-amino-1-(5-phospho-beta-D-ribosyl)imidazole-4-carboxamide + L-glutamate + H(+). It functions in the pathway amino-acid biosynthesis; L-histidine biosynthesis; L-histidine from 5-phospho-alpha-D-ribose 1-diphosphate: step 5/9. In terms of biological role, IGPS catalyzes the conversion of PRFAR and glutamine to IGP, AICAR and glutamate. The HisF subunit catalyzes the cyclization activity that produces IGP and AICAR from PRFAR using the ammonia provided by the HisH subunit. The chain is Imidazole glycerol phosphate synthase subunit HisF from Ruegeria pomeroyi (strain ATCC 700808 / DSM 15171 / DSS-3) (Silicibacter pomeroyi).